The primary structure comprises 199 residues: Ribonuclease P protein component 3 (199 aa).

The protein belongs to the eukaryotic/archaeal RNase P protein component 3 family. In terms of assembly, consists of a catalytic RNA component and at least 4-5 protein subunits.

Its subcellular location is the cytoplasm. The enzyme catalyses Endonucleolytic cleavage of RNA, removing 5'-extranucleotides from tRNA precursor.. Functionally, part of ribonuclease P, a protein complex that generates mature tRNA molecules by cleaving their 5'-ends. The sequence is that of Ribonuclease P protein component 3 from Archaeoglobus fulgidus (strain ATCC 49558 / DSM 4304 / JCM 9628 / NBRC 100126 / VC-16).